We begin with the raw amino-acid sequence, 518 residues long: Maturase K (518 aa).

Belongs to the intron maturase 2 family. MatK subfamily.

The protein resides in the plastid. It localises to the chloroplast. Functionally, usually encoded in the trnK tRNA gene intron. Probably assists in splicing its own and other chloroplast group II introns. The protein is Maturase K of Syzygium cumini (Java plum).